The following is a 413-amino-acid chain: Serine hydroxymethyltransferase (413 aa).

(6S)-5,6,7,8-tetrahydrofolate contacts are provided by residues Leu115 and 119-121 (GHL). The residue at position 224 (Lys224) is an N6-(pyridoxal phosphate)lysine.

This sequence belongs to the SHMT family. Homodimer. Requires pyridoxal 5'-phosphate as cofactor.

Its subcellular location is the cytoplasm. It catalyses the reaction (6R)-5,10-methylene-5,6,7,8-tetrahydrofolate + glycine + H2O = (6S)-5,6,7,8-tetrahydrofolate + L-serine. Its pathway is one-carbon metabolism; tetrahydrofolate interconversion. It functions in the pathway amino-acid biosynthesis; glycine biosynthesis; glycine from L-serine: step 1/1. In terms of biological role, catalyzes the reversible interconversion of serine and glycine with tetrahydrofolate (THF) serving as the one-carbon carrier. This reaction serves as the major source of one-carbon groups required for the biosynthesis of purines, thymidylate, methionine, and other important biomolecules. Also exhibits THF-independent aldolase activity toward beta-hydroxyamino acids, producing glycine and aldehydes, via a retro-aldol mechanism. The chain is Serine hydroxymethyltransferase from Mycoplasma mycoides subsp. mycoides SC (strain CCUG 32753 / NCTC 10114 / PG1).